The following is a 411-amino-acid chain: Arginine deiminase (411 aa).

Catalysis depends on Cys-401, which acts as the Amidino-cysteine intermediate.

This sequence belongs to the arginine deiminase family. In terms of processing, glycosylated.

Its subcellular location is the cytoplasm. The enzyme catalyses L-arginine + H2O = L-citrulline + NH4(+). Its pathway is amino-acid degradation; L-arginine degradation via ADI pathway; carbamoyl phosphate from L-arginine: step 1/2. This Streptococcus pyogenes serotype M1 protein is Arginine deiminase (arcA).